We begin with the raw amino-acid sequence, 2764 residues long: Teneurin-2 (2764 aa).

The region spanning M1–C375 is the Teneurin N-terminal domain. Over M1–S379 the chain is Cytoplasmic. 2 positions are modified to phosphoserine: S90 and S124. The tract at residues T111–N271 is disordered. Residues S141–T155 show a composition bias toward polar residues. T155 carries the post-translational modification Phosphothreonine. The residue at position 157 (S157) is a Phosphoserine. The segment covering N159–G168 has biased composition (basic and acidic residues). A compositionally biased stretch (low complexity) spans T174 to S188. Residues D202–D211 are compositionally biased toward polar residues. Over residues S229–P240 the composition is skewed to low complexity. The helical transmembrane segment at A380 to L400 threads the bilayer. The Extracellular portion of the chain corresponds to G401–R2764. 2 N-linked (GlcNAc...) asparagine glycosylation sites follow: N443 and N482. EGF-like domains are found at residues D575 to A603, L598 to D634, P636 to E668, E669 to L701, A702 to S735, V737 to D765, V768 to T796, and D798 to N831. 22 disulfide bridges follow: C576/C586, C580/C591, C593/C602, C611/C622, C624/C633, C640/C651, C645/C656, C658/C667, C672/C683, C677/C688, C690/C699, C710/C723, C725/C734, C738/C748, C742/C753, C755/C764, C769/C779, C773/C784, C786/C795, C800/C810, C804/C819, and C821/C830. N915, N938, and N1257 each carry an N-linked (GlcNAc...) asparagine glycan. NHL repeat units follow at residues L1262–L1306, A1332–I1376, L1391–R1442, L1464–L1491, and C1520–N1563. A YD 1 repeat occupies Y1573 to H1592. N1606 carries N-linked (GlcNAc...) asparagine glycosylation. 3 YD repeats span residues Y1609–R1629, Y1672–F1691, and Y1692–H1714. N1702, N1739, N1763, N1797, and N1882 each carry an N-linked (GlcNAc...) asparagine glycan. 18 YD repeats span residues Y1885–D1904, Y1926–E1944, Y1945–S1965, Y1972–D1989, Y1990–K2011, Y2012–T2029, Y2032–T2052, Y2055–I2075, Y2083–P2103, Y2109–Y2126, Y2127–V2153, Y2155–Q2168, Y2169–T2192, Y2195–S2215, Y2216–L2236, Y2238–G2258, Y2270–Y2290, and Y2292–F2312. N-linked (GlcNAc...) asparagine glycosylation is present at N1983. N-linked (GlcNAc...) asparagine glycosylation is present at N2187. N2327 carries an N-linked (GlcNAc...) asparagine glycan. The YD 23 repeat unit spans residues Y2338–L2379. N2638 carries an N-linked (GlcNAc...) asparagine glycan.

It belongs to the tenascin family. Teneurin subfamily. Homodimer; disulfide-linked. Heterodimer with either TENM1 or TENM3. May also form heterodimer with TENM4. Derives from the membrane form by proteolytic processing. In terms of processing, derives from the plasma membrane form by proteolytic cleavage and translocates to the nucleus. Homophilic binding of the C-terminal extracellular domain stimulates its proteolytic cleavage and release in the cytoplasmic. Is subjected to rapid degradation by the proteasome pathway. As to expression, expressed in the cortex, CA1, CA2, CA3, dentate gyrus and granular layer of the hippocampus. Expressed in the Purkinje cells and molecular layer of the cerebellum.

The protein resides in the cell membrane. It localises to the presynaptic cell membrane. The protein localises to the postsynaptic cell membrane. It is found in the endoplasmic reticulum. Its subcellular location is the golgi apparatus. The protein resides in the synapse. It localises to the cell projection. The protein localises to the dendritic spine. It is found in the filopodium. Its subcellular location is the growth cone. The protein resides in the nucleus. It localises to the PML body. In terms of biological role, involved in neural development, regulating the establishment of proper connectivity within the nervous system. Acts as a ligand of the ADGRL1 and ADGRL3 receptors that are expressed at the surface of adjacent cells. Promotes the formation of filopodia and enlarged growth cone in neuronal cells. Mediates axon guidance and homophilic and heterophilic cell-cell adhesion. May function as a cellular signal transducer. Functionally, induces gene transcription inhibition. This is Teneurin-2 (Tenm2) from Mus musculus (Mouse).